The chain runs to 299 residues: YjeF N-terminal domain-containing protein 3 (299 aa).

Residues alanine 74 to leucine 287 enclose the YjeF N-terminal domain.

Interacts with APOA1. Binds to HDL. As to expression, expressed in theca cells in ovary and in Leydig cells in testis (at protein level). Also expressed in brain and mammary gland.

In terms of biological role, may accelerate cholesterol efflux from endothelial cells to high-density lipoprotein (HDL) and thereby regulates angiogenesis. May orchestrate hematopoietic stem and progenitor cell emergence from the hemogenic endothelium, a type of specialized endothelium manifesting hematopoietic potential. YJEFN3-mediated cholesterol efflux activates endothelial SREBF2, the master transcription factor for cholesterol biosynthesis, which in turn transactivates NOTCH and promotes hematopoietic stem and progenitor cell emergence. May play a role in spermiogenesis and oogenesis. This is YjeF N-terminal domain-containing protein 3 (YJEFN3) from Homo sapiens (Human).